We begin with the raw amino-acid sequence, 204 residues long: Large ribosomal subunit protein eL15 (204 aa).

Glycine 2 carries N-myristoyl glycine lipidation. Serine 34 carries the phosphoserine modification. Lysine 83 participates in a covalent cross-link: Glycyl lysine isopeptide (Lys-Gly) (interchain with G-Cter in SUMO2). 2 positions are modified to phosphoserine: serine 97 and serine 100. A disordered region spans residues 165-186 (TSAGRKSRGLGKGHKFHHTIGG). Positions 169–182 (RKSRGLGKGHKFHH) are enriched in basic residues.

It belongs to the eukaryotic ribosomal protein eL15 family. Component of the large ribosomal subunit. Interacts with IFIT1 (via TPR repeats 1-4).

The protein resides in the cytoplasm. Functionally, component of the large ribosomal subunit. The ribosome is a large ribonucleoprotein complex responsible for the synthesis of proteins in the cell. The polypeptide is Large ribosomal subunit protein eL15 (RPL15) (Bos taurus (Bovine)).